The sequence spans 384 residues: PqqA peptide cyclase (384 aa).

Residues 5-220 (VGLPLWLLAE…TNEYREKLKA (216 aa)) enclose the Radical SAM core domain. [4Fe-4S] cluster contacts are provided by C19, C23, and C26.

This sequence belongs to the radical SAM superfamily. PqqE family. In terms of assembly, interacts with PqqD. The interaction is necessary for activity of PqqE. [4Fe-4S] cluster serves as cofactor.

It catalyses the reaction [PQQ precursor protein] + S-adenosyl-L-methionine = E-Y cross-linked-[PQQ precursor protein] + 5'-deoxyadenosine + L-methionine + H(+). The protein operates within cofactor biosynthesis; pyrroloquinoline quinone biosynthesis. In terms of biological role, catalyzes the cross-linking of a glutamate residue and a tyrosine residue in the PqqA protein as part of the biosynthesis of pyrroloquinoline quinone (PQQ). The polypeptide is PqqA peptide cyclase (Acinetobacter baumannii (strain SDF)).